The sequence spans 86 residues: Small ribosomal subunit protein bS20 (86 aa).

The interval 1 to 25 is disordered; it reads MANIKSQQKRNKTNERARLRNKSVK.

The protein belongs to the bacterial ribosomal protein bS20 family.

In terms of biological role, binds directly to 16S ribosomal RNA. The chain is Small ribosomal subunit protein bS20 from Mycobacterium avium (strain 104).